Here is a 445-residue protein sequence, read N- to C-terminus: N-succinylarginine dihydrolase (445 aa).

Substrate is bound by residues 19–28, Asn110, and 137–138; these read AGLSYGNVAS and HR. The active site involves Glu174. A substrate-binding site is contributed by Arg214. His250 is a catalytic residue. Substrate is bound by residues Asp252 and Asn363. Cys369 acts as the Nucleophile in catalysis.

Belongs to the succinylarginine dihydrolase family. As to quaternary structure, homodimer.

The enzyme catalyses N(2)-succinyl-L-arginine + 2 H2O + 2 H(+) = N(2)-succinyl-L-ornithine + 2 NH4(+) + CO2. The protein operates within amino-acid degradation; L-arginine degradation via AST pathway; L-glutamate and succinate from L-arginine: step 2/5. In terms of biological role, catalyzes the hydrolysis of N(2)-succinylarginine into N(2)-succinylornithine, ammonia and CO(2). The sequence is that of N-succinylarginine dihydrolase from Shewanella loihica (strain ATCC BAA-1088 / PV-4).